Here is a 261-residue protein sequence, read N- to C-terminus: Sulfur carrier protein FdhD (261 aa).

The active-site Cysteine persulfide intermediate is Cys105. A Mo-bis(molybdopterin guanine dinucleotide)-binding site is contributed by 245–250 (FIRGDR).

The protein belongs to the FdhD family.

It localises to the cytoplasm. Required for formate dehydrogenase (FDH) activity. Acts as a sulfur carrier protein that transfers sulfur from IscS to the molybdenum cofactor prior to its insertion into FDH. The sequence is that of Sulfur carrier protein FdhD from Listeria monocytogenes serotype 4b (strain F2365).